The sequence spans 106 residues: uncharacterized protein (106 aa).

The signal sequence occupies residues 1-22; that stretch reads MKKHPNLLLGFSVYLSAGTKLT. A disordered region spans residues 23–46; that stretch reads IPPEAEQHTAPSDNNKRKRAKCDD.

This is an uncharacterized protein from Arabidopsis thaliana (Mouse-ear cress).